Here is a 199-residue protein sequence, read N- to C-terminus: Nicotinamide riboside kinase 1 (199 aa).

10 to 18 (GVTNSGKTT) provides a ligand contact to ATP. Residues Thr-17 and Asp-36 each coordinate Mg(2+). Asp-36 acts as the Proton acceptor in catalysis. Residues 36-39 (DDFF) and 55-56 (YD) contribute to the substrate site. Arg-128 contacts ATP. Residues Arg-129 and 134-135 (YQ) contribute to the substrate site. Residues 132 to 134 (RVY) and 172 to 174 (KSE) contribute to the ATP site.

The protein belongs to the uridine kinase family. NRK subfamily. In terms of assembly, monomer.

The enzyme catalyses beta-nicotinamide D-riboside + ATP = beta-nicotinamide D-ribonucleotide + ADP + H(+). It carries out the reaction beta-D-ribosylnicotinate + ATP = nicotinate beta-D-ribonucleotide + ADP + H(+). The protein operates within cofactor biosynthesis; NAD(+) biosynthesis. In terms of biological role, catalyzes the phosphorylation of nicotinamide riboside (NR) and nicotinic acid riboside (NaR) to form nicotinamide mononucleotide (NMN) and nicotinic acid mononucleotide (NaMN). The enzyme also phosphorylates the antitumor drugs tiazofurin and 3-deazaguanosine. In Homo sapiens (Human), this protein is Nicotinamide riboside kinase 1 (NMRK1).